Consider the following 196-residue polypeptide: Peptide deformylase (196 aa).

2 residues coordinate Fe cation: Cys105 and His147. Glu148 is an active-site residue. His151 is a Fe cation binding site.

This sequence belongs to the polypeptide deformylase family. It depends on Fe(2+) as a cofactor.

The enzyme catalyses N-terminal N-formyl-L-methionyl-[peptide] + H2O = N-terminal L-methionyl-[peptide] + formate. Functionally, removes the formyl group from the N-terminal Met of newly synthesized proteins. Requires at least a dipeptide for an efficient rate of reaction. N-terminal L-methionine is a prerequisite for activity but the enzyme has broad specificity at other positions. The chain is Peptide deformylase from Flavobacterium johnsoniae (strain ATCC 17061 / DSM 2064 / JCM 8514 / BCRC 14874 / CCUG 350202 / NBRC 14942 / NCIMB 11054 / UW101) (Cytophaga johnsonae).